Reading from the N-terminus, the 219-residue chain is Ribose-5-phosphate isomerase A (219 aa).

Residues 28 to 31, 81 to 84, and 94 to 97 each bind substrate; these read TGST, DGAD, and KGGG. Glutamate 103 functions as the Proton acceptor in the catalytic mechanism. Lysine 121 lines the substrate pocket.

It belongs to the ribose 5-phosphate isomerase family. Homodimer.

The enzyme catalyses aldehydo-D-ribose 5-phosphate = D-ribulose 5-phosphate. It functions in the pathway carbohydrate degradation; pentose phosphate pathway; D-ribose 5-phosphate from D-ribulose 5-phosphate (non-oxidative stage): step 1/1. In terms of biological role, catalyzes the reversible conversion of ribose-5-phosphate to ribulose 5-phosphate. This is Ribose-5-phosphate isomerase A from Erwinia tasmaniensis (strain DSM 17950 / CFBP 7177 / CIP 109463 / NCPPB 4357 / Et1/99).